The sequence spans 1114 residues: Translation initiation factor IF-2 (1114 aa).

Disordered stretches follow at residues 69 to 102 (SIKK…PLLI) and 181 to 507 (INNN…KRRA). The span at 85–96 (SKKETPLKDNSN) shows a compositional bias: basic and acidic residues. The segment covering 181 to 198 (INNNVKSNESSQNISSAG) has biased composition (polar residues). Low complexity predominate over residues 240-251 (INPNKQNNKQNI). A compositionally biased stretch (polar residues) spans 252–261 (AFKQTGSNRI). Low complexity-rich tracts occupy residues 262–278 (GSPN…GLRN), 290–309 (NRQG…GLRN), and 321–337 (NRQG…NRPG). The segment covering 365–375 (NSEKDNKDKNN) has biased composition (basic and acidic residues). The span at 376–385 (NAKQNINGPN) shows a compositional bias: low complexity. The segment covering 417-431 (GKTDWDDSAKLEALR) has biased composition (basic and acidic residues). The span at 489–505 (KQFKKKKKETTRQRQKR) shows a compositional bias: basic residues. One can recognise a tr-type G domain in the interval 606–778 (RRPPVITVMG…ILLVSEVEDL (173 aa)). The tract at residues 615–622 (GHVDHGKT) is G1. Residue 615–622 (GHVDHGKT) coordinates GTP. The tract at residues 640–644 (GITQH) is G2. Residues 665 to 668 (DTPG) are G3. Residues 665-669 (DTPGH) and 719-722 (NKID) contribute to the GTP site. Residues 719–722 (NKID) are G4. The interval 755 to 757 (SAI) is G5.

The protein belongs to the TRAFAC class translation factor GTPase superfamily. Classic translation factor GTPase family. IF-2 subfamily.

It localises to the cytoplasm. In terms of biological role, one of the essential components for the initiation of protein synthesis. Protects formylmethionyl-tRNA from spontaneous hydrolysis and promotes its binding to the 30S ribosomal subunits. Also involved in the hydrolysis of GTP during the formation of the 70S ribosomal complex. The chain is Translation initiation factor IF-2 from Prochlorococcus marinus (strain MIT 9301).